A 427-amino-acid polypeptide reads, in one-letter code: Glutamate-1-semialdehyde 2,1-aminomutase (427 aa).

Position 265 is an N6-(pyridoxal phosphate)lysine (Lys265).

It belongs to the class-III pyridoxal-phosphate-dependent aminotransferase family. HemL subfamily. As to quaternary structure, homodimer. It depends on pyridoxal 5'-phosphate as a cofactor.

Its subcellular location is the cytoplasm. It carries out the reaction (S)-4-amino-5-oxopentanoate = 5-aminolevulinate. Its pathway is porphyrin-containing compound metabolism; protoporphyrin-IX biosynthesis; 5-aminolevulinate from L-glutamyl-tRNA(Glu): step 2/2. This Bordetella pertussis (strain Tohama I / ATCC BAA-589 / NCTC 13251) protein is Glutamate-1-semialdehyde 2,1-aminomutase.